A 1657-amino-acid chain; its full sequence is Ras GTPase-activating-like protein IQGAP1 (1657 aa).

N-acetylserine is present on Ser2. Phosphoserine is present on Ser2. In terms of domain architecture, Calponin-homology (CH) spans 44–159 (LCHLEEAKRW…YCIHALSLYL (116 aa)). Phosphotyrosine is present on Tyr172. Ser330 is modified (phosphoserine). One can recognise a WW domain in the interval 685–710 (WVKHWVKGGYHYYHNLETQAGGWAEP). 4 consecutive IQ domains span residues 745 to 774 (NEGL…FLKK), 775 to 804 (QIPA…YLHS), 805 to 834 (HKDE…YFRD), and 835 to 864 (HIND…AEDP). Residues 956-1274 (GGLKALSKEK…FFQVACDVPE (319 aa)) are C1. The region spanning 1020–1269 (YLLLRLFQTA…QKFRRFFQVA (250 aa)) is the Ras-GAP domain. The tract at residues 1276 to 1657 (QDKFNVDEYS…FLLNKKFYGK (382 aa)) is C2. The residue at position 1441 (Ser1441) is a Phosphoserine.

As to quaternary structure, interacts with CDC42; the interaction is demonstrated with IQGAP1 in GTP-bound and in nucleotide-free state. Interacts with RAC1. Does not interact with RHOA. Interacts with TSG101. Interacts with PAK6. Interacts with SASH1. Interacts with PJVK. Interacts with SLC26A4. This interaction enhances the chloride-bicarbonate exchange activity of SLC26A4. Interacts with SVEP1. Interacts with ILK; the interaction is required for localization of IQGAP to the cell cortex. In terms of assembly, (Microbial infection) In case of infection, interacts with S.typhimurium protein sseI. As to expression, expressed in the kidney (at protein level).

The protein localises to the cell membrane. Its subcellular location is the nucleus. It localises to the cytoplasm. It is found in the cell cortex. The protein resides in the apical cell membrane. The protein localises to the basolateral cell membrane. In terms of biological role, plays a crucial role in regulating the dynamics and assembly of the actin cytoskeleton. Recruited to the cell cortex by interaction with ILK which allows it to cooperate with its effector DIAPH1 to locally stabilize microtubules and allow stable insertion of caveolae into the plasma membrane. Binds to activated CDC42 but does not stimulate its GTPase activity. Associates with calmodulin. May promote neurite outgrowth. May play a possible role in cell cycle regulation by contributing to cell cycle progression after DNA replication arrest. This chain is Ras GTPase-activating-like protein IQGAP1 (Iqgap1), found in Mus musculus (Mouse).